A 964-amino-acid chain; its full sequence is Activator of stress genes 1 (964 aa).

Residues 21 to 47 constitute a DNA-binding region (zn(2)-C6 fungal-type); it reads CDECRKKKVKCDGQQPCIHCTVYSYEC. The tract at residues 104–125 is disordered; it reads ASTIPASNNPSKPRKYKTKSTR. Phosphoserine; by ATM or ATR is present on S166. S186 is modified (phosphoserine). Composition is skewed to polar residues over residues 190–201, 209–225, and 733–759; these read PVLSSNSKNSTP, KSDS…DSVD, and NNTP…TNMS. 3 disordered regions span residues 190-225, 733-764, and 800-900; these read PVLS…DSVD, NNTP…ERDP, and NSAF…SPSY. Over residues 800 to 896 the composition is skewed to low complexity; sequence NSAFDFSSSK…NDFGIKIDNN (97 aa). A Phosphoserine modification is found at S963.

The protein belongs to the ASG1 family.

Its subcellular location is the nucleus. Functionally, probable transcription factor involved in the stress response. This is Activator of stress genes 1 (ASG1) from Saccharomyces cerevisiae (strain ATCC 204508 / S288c) (Baker's yeast).